A 171-amino-acid polypeptide reads, in one-letter code: uncharacterized protein (171 aa).

A run of 2 helical transmembrane segments spans residues valine 13–alanine 35 and alanine 50–valine 72.

The protein localises to the cell membrane. This is an uncharacterized protein from Treponema pallidum (strain Nichols).